Here is a 119-residue protein sequence, read N- to C-terminus: Large ribosomal subunit protein bL17 (119 aa).

Belongs to the bacterial ribosomal protein bL17 family. As to quaternary structure, part of the 50S ribosomal subunit. Contacts protein L32.

In Mycoplasma mycoides subsp. mycoides SC (strain CCUG 32753 / NCTC 10114 / PG1), this protein is Large ribosomal subunit protein bL17.